We begin with the raw amino-acid sequence, 93 residues long: Phosphoribosyl-ATP pyrophosphatase (93 aa).

Belongs to the PRA-PH family.

The protein resides in the cytoplasm. It catalyses the reaction 1-(5-phospho-beta-D-ribosyl)-ATP + H2O = 1-(5-phospho-beta-D-ribosyl)-5'-AMP + diphosphate + H(+). Its pathway is amino-acid biosynthesis; L-histidine biosynthesis; L-histidine from 5-phospho-alpha-D-ribose 1-diphosphate: step 2/9. This is Phosphoribosyl-ATP pyrophosphatase from Metallosphaera sedula (strain ATCC 51363 / DSM 5348 / JCM 9185 / NBRC 15509 / TH2).